A 264-amino-acid chain; its full sequence is Endoglucanase S (264 aa).

Positions 1-32 (MQTVNTQPHRIFRVLLPAVFSSLLLSSLTVSA) are cleaved as a signal peptide.

It belongs to the glycosyl hydrolase 12 (cellulase H) family.

It catalyses the reaction Endohydrolysis of (1-&gt;4)-beta-D-glucosidic linkages in cellulose, lichenin and cereal beta-D-glucans.. The protein is Endoglucanase S (celS) of Pectobacterium parmentieri.